A 303-amino-acid chain; its full sequence is uncharacterized protein (303 aa).

The next 4 helical transmembrane spans lie at 55–77 (FLVK…LFIQ), 92–111 (PAVF…TKII), 208–230 (FSLP…ATSL), and 240–257 (IPHI…KILI).

It localises to the cell membrane. This is an uncharacterized protein from Bacillus subtilis (strain 168).